The primary structure comprises 441 residues: MSVLLRSGLGPLCAVARAAIPFIWRGKYFSSGNEPAENPVTPMLRHLMYKIKSTGPITVAEYMKEVLTNPAKGYYVYRDMLGEKGDFITSPEISQIFGELLGIWFISEWMATGKSTAFQLVELGPGRGTLVGDILRVFTQLGSVLKNCDISVHLVEVSQKLSEIQALTLTKEKVPLERNAGSPVYMKGVTKSGIPISWYRDLHDVPKGYSFYLAHEFFDVLPVHKFQKTPQGWREVFVDIDPQVSDKLRFVLAPSATPAEAFIQHDETRDHVEVCPDAGVIIEELSQRIALTGGAALVADYGHDGTKTDTFRGFCDHKLHDVLIAPGTADLTADVDFSYLRRMAQGKVASLGPIKQHTFLKNMGIDVRLKVLLDKSNEPSVRQQLLQGYDMLMNPKKMGERFNFFALLPHQRLQGGRYQRNARQSKPFASVVAGFSELAWQ.

The N-terminal 46 residues, 1-46 (MSVLLRSGLGPLCAVARAAIPFIWRGKYFSSGNEPAENPVTPMLRH), are a transit peptide targeting the mitochondrion.

This sequence belongs to the NDUFAF7 family. In terms of assembly, interacts with NDUFS2.

It localises to the mitochondrion. The catalysed reaction is L-arginyl-[protein] + 2 S-adenosyl-L-methionine = N(omega),N(omega)'-dimethyl-L-arginyl-[protein] + 2 S-adenosyl-L-homocysteine + 2 H(+). Its function is as follows. Arginine methyltransferase involved in the assembly or stability of mitochondrial NADH:ubiquinone oxidoreductase complex (complex I). Acts by mediating symmetric dimethylation of 'Arg-118' of NDUFS2 after it assembles into the complex I, stabilizing the early intermediate complex. The sequence is that of Protein arginine methyltransferase NDUFAF7, mitochondrial from Homo sapiens (Human).